The sequence spans 238 residues: uncharacterized protein (238 aa).

Belongs to the mimivirus L74/L77/R857 family.

This is an uncharacterized protein from Acanthamoeba polyphaga mimivirus (APMV).